Consider the following 415-residue polypeptide: WD-40 repeat-containing protein MSI2 (415 aa).

WD repeat units lie at residues 166 to 206 (GHDK…QDKV), 215 to 255 (GHES…MQHQ), 258 to 298 (VHER…APLH), 302 to 342 (SHEG…EEQL), and 361 to 401 (GHKA…YRDE). The short motif at 232-248 (LFGSAGEDGRLVIWDTR) is the DWD box element.

This sequence belongs to the WD repeat RBAP46/RBAP48/MSI1 family.

The protein localises to the nucleus. Core histone-binding subunit that may target chromatin assembly factors, chromatin remodeling factors and histone deacetylases to their histone substrates in a manner that is regulated by nucleosomal DNA. This Arabidopsis thaliana (Mouse-ear cress) protein is WD-40 repeat-containing protein MSI2 (MSI2).